A 130-amino-acid chain; its full sequence is UPF0102 protein RPA0323 (130 aa).

It belongs to the UPF0102 family.

The protein is UPF0102 protein RPA0323 of Rhodopseudomonas palustris (strain ATCC BAA-98 / CGA009).